The chain runs to 343 residues: MLLGGRTAYLSVLGLITAYAAFTIWYTLTAQLHNPCVYATVSIDSKDGIAAKWEVYNSTIVYAYPENGAKRFSDGLSGFDYVCRENWVNESKLDVLKNMKELHDKVRIVVGTRNCRAYLWSVQLQMITGAWLIYIAFLCLRQERRLLGPFRNQNEFLSPTGYTFNYATYTLATTVLKTHYTKFALLLCEASLRRVALSRTFKRDPIGFLCEHSAALALIGLEVGTHFVARLLVVGTVTLVHTPCSQIYPIYLKLASWGFVVAVTIVEIVAIIYEKPPKTGSSANPPTPATHGVKGLCTSCCSTVLANLCGKLVYLLLVIGAVSILLHYEQRIQIGLLGESFSS.

An N-terminal signal peptide occupies residues 1-31 (MLLGGRTAYLSVLGLITAYAAFTIWYTLTAQ). The Extracellular segment spans residues 32–118 (LHNPCVYATV…VVGTRNCRAY (87 aa)). 2 N-linked (GlcNAc...) asparagine; by host glycosylation sites follow: Asn-57 and Asn-89. Residues 119–139 (LWSVQLQMITGAWLIYIAFLC) traverse the membrane as a helical segment. Topologically, residues 140–213 (LRQERRLLGP…DPIGFLCEHS (74 aa)) are cytoplasmic. The helical transmembrane segment at 214-234 (AALALIGLEVGTHFVARLLVV) threads the bilayer. Topologically, residues 235–251 (GTVTLVHTPCSQIYPIY) are extracellular. Residues 252-272 (LKLASWGFVVAVTIVEIVAII) traverse the membrane as a helical segment. The Cytoplasmic portion of the chain corresponds to 273–303 (YEKPPKTGSSANPPTPATHGVKGLCTSCCST). A helical transmembrane segment spans residues 304–324 (VLANLCGKLVYLLLVIGAVSI). The Extracellular segment spans residues 325–343 (LLHYEQRIQIGLLGESFSS).

It belongs to the alphaherpesvirinae glycoprotein K family. As to quaternary structure, interacts (via UL20 interaction region) with protein UL20 homolog (via N-terminus); this interaction probably plays a role in the coordinate transport of protein UL20 homolog and gK to the trans-Golgi network (TGN), and is required for the cell surface expression of gK. N-glycosylated.

The protein resides in the host cell membrane. The protein localises to the host endosome membrane. Its subcellular location is the host Golgi apparatus membrane. Glycoprotein that probably modulates membrane fusion events during secondary envelopment of cytoplasmic capsids that bud into specific trans-Golgi network (TGN)-derived membranes. The polypeptide is Envelope glycoprotein K (gK) (Equine herpesvirus 1 (strain Ab4p) (EHV-1)).